Reading from the N-terminus, the 769-residue chain is Neutral alpha-glucosidase C (769 aa).

Aspartate 366 acts as the Nucleophile in catalysis. The active site involves glutamate 369. Residue aspartate 442 is the Proton donor of the active site.

This sequence belongs to the glycosyl hydrolase 31 family.

It carries out the reaction Hydrolysis of terminal, non-reducing (1-&gt;4)-linked alpha-D-glucose residues with release of alpha-D-glucose.. Its function is as follows. Has alpha-glucosidase activity. The protein is Neutral alpha-glucosidase C (GANC) of Macaca fascicularis (Crab-eating macaque).